The primary structure comprises 242 residues: 6-carboxyhexanoate--CoA ligase (242 aa).

It belongs to the BioW family. As to quaternary structure, homodimer. The cofactor is Mg(2+).

The enzyme catalyses heptanedioate + ATP + CoA = 6-carboxyhexanoyl-CoA + AMP + diphosphate. Its pathway is metabolic intermediate metabolism; pimeloyl-CoA biosynthesis; pimeloyl-CoA from pimelate: step 1/1. Catalyzes the transformation of pimelate into pimeloyl-CoA with concomitant hydrolysis of ATP to AMP. This Veillonella parvula (strain ATCC 10790 / DSM 2008 / CCUG 5123 / JCM 12972 / NCTC 11810 / Te3) (Veillonella alcalescens) protein is 6-carboxyhexanoate--CoA ligase.